Consider the following 80-residue polypeptide: Dermaseptin-A5 (80 aa).

An N-terminal signal peptide occupies residues 1-22; it reads MAFLKKSLFLVLFLGLVSLSIC. Positions 23–43 are excised as a propeptide; it reads EEEKRENEDEEEQEDDEQSEM. A disordered region spans residues 24-45; that stretch reads EEKRENEDEEEQEDDEQSEMKR. Residues 30–40 show a composition bias toward acidic residues; that stretch reads EDEEEQEDDEQ. Valine 77 carries the valine amide modification. Residues 79–80 constitute a propeptide that is removed on maturation; it reads EQ.

Belongs to the frog skin active peptide (FSAP) family. Dermaseptin subfamily. As to expression, expressed by the skin glands.

The protein localises to the secreted. Possesses a potent antimicrobial activity against Gram-positive and Gram-negative bacteria. Probably acts by disturbing membrane functions with its amphipathic structure. This is Dermaseptin-A5 from Agalychnis annae (Blue-sided leaf frog).